Reading from the N-terminus, the 267-residue chain is 4-hydroxy-tetrahydrodipicolinate reductase (267 aa).

Residues 9–14 (GASGRM) and Asp-35 each bind NAD(+). Arg-36 provides a ligand contact to NADP(+). Residues 98 to 100 (GTT) and 122 to 125 (ASNF) contribute to the NAD(+) site. Catalysis depends on His-155, which acts as the Proton donor/acceptor. His-156 serves as a coordination point for (S)-2,3,4,5-tetrahydrodipicolinate. Catalysis depends on Lys-159, which acts as the Proton donor. A (S)-2,3,4,5-tetrahydrodipicolinate-binding site is contributed by 165 to 166 (GT).

The protein belongs to the DapB family.

It is found in the cytoplasm. The catalysed reaction is (S)-2,3,4,5-tetrahydrodipicolinate + NAD(+) + H2O = (2S,4S)-4-hydroxy-2,3,4,5-tetrahydrodipicolinate + NADH + H(+). The enzyme catalyses (S)-2,3,4,5-tetrahydrodipicolinate + NADP(+) + H2O = (2S,4S)-4-hydroxy-2,3,4,5-tetrahydrodipicolinate + NADPH + H(+). It participates in amino-acid biosynthesis; L-lysine biosynthesis via DAP pathway; (S)-tetrahydrodipicolinate from L-aspartate: step 4/4. Functionally, catalyzes the conversion of 4-hydroxy-tetrahydrodipicolinate (HTPA) to tetrahydrodipicolinate. The protein is 4-hydroxy-tetrahydrodipicolinate reductase of Chromobacterium violaceum (strain ATCC 12472 / DSM 30191 / JCM 1249 / CCUG 213 / NBRC 12614 / NCIMB 9131 / NCTC 9757 / MK).